Reading from the N-terminus, the 339-residue chain is Fe-S cluster assembly protein DRE2 (339 aa).

Residues 1–157 (MTRILLLLHP…KKLSSTHAAV (157 aa)) form an N-terminal SAM-like domain region. Positions 158–206 (GLTDTSASNTDEENDDVNSKRKLQETKLAYFSESDDEDEEDQIIDENNL) are linker. [2Fe-2S] cluster-binding residues include C221, C233, C236, and C238. Positions 221–238 (CELPNGKKRRKACKDCTC) are fe-S binding site A. [4Fe-4S] cluster contacts are provided by C302, C305, C313, and C316. 2 short sequence motifs (cx2C motif) span residues 302–305 (CSSC) and 313–316 (CDGC). The segment at 302 to 316 (CSSCSLGDAFRCDGC) is fe-S binding site B.

This sequence belongs to the anamorsin family. Monomer. Interacts with TAH18. Interacts with MIA40. The cofactor is [2Fe-2S] cluster. [4Fe-4S] cluster is required as a cofactor.

It is found in the cytoplasm. The protein localises to the mitochondrion intermembrane space. Component of the cytosolic iron-sulfur (Fe-S) protein assembly (CIA) machinery required for the maturation of extramitochondrial Fe-S proteins. Part of an electron transfer chain functioning in an early step of cytosolic Fe-S biogenesis, facilitating the de novo assembly of a [4Fe-4S] cluster on the scaffold complex CFD1-NBP35. Electrons are transferred to DRE2 from NADPH via the FAD- and FMN-containing protein TAH18. TAH18-DRE2 are also required for the assembly of the diferric tyrosyl radical cofactor of ribonucleotide reductase (RNR), probably by providing electrons for reduction during radical cofactor maturation in the catalytic small subunit RNR2. In Debaryomyces hansenii (strain ATCC 36239 / CBS 767 / BCRC 21394 / JCM 1990 / NBRC 0083 / IGC 2968) (Yeast), this protein is Fe-S cluster assembly protein DRE2.